A 349-amino-acid polypeptide reads, in one-letter code: Quinone oxidoreductase-like protein 1 (349 aa).

Belongs to the zinc-containing alcohol dehydrogenase family. Quinone oxidoreductase subfamily. Homodimer. Component of the FERRY complex composed of five subunits, TBCK, PPP1R21, FERRY3, CRYZL1 and GATD1 with a ratio of 1:2:1:2:4, respectively. Ubiquitous.

The protein resides in the early endosome. Functionally, component of the FERRY complex (Five-subunit Endosomal Rab5 and RNA/ribosome intermediary). The FERRY complex directly interacts with mRNAs and RAB5A, and functions as a RAB5A effector involved in the localization and the distribution of specific mRNAs most likely by mediating their endosomal transport. The complex recruits mRNAs and ribosomes to early endosomes through direct mRNA-interaction. The protein is Quinone oxidoreductase-like protein 1 (CRYZL1) of Homo sapiens (Human).